A 147-amino-acid chain; its full sequence is UPF0179 protein NP_3406A (147 aa).

The protein belongs to the UPF0179 family.

In Natronomonas pharaonis (strain ATCC 35678 / DSM 2160 / CIP 103997 / JCM 8858 / NBRC 14720 / NCIMB 2260 / Gabara) (Halobacterium pharaonis), this protein is UPF0179 protein NP_3406A.